A 401-amino-acid polypeptide reads, in one-letter code: Rab-interacting lysosomal protein (401 aa).

Residues 11–101 (PGWGSREAAG…REENERLRRE (91 aa)) enclose the RH1 domain. Residues 75–181 (DSLQVSAQPA…AQDRERERQQ (107 aa)) are a coiled coil. 2 disordered regions span residues 167–239 (TQLR…SEAG) and 304–388 (KMLG…SALH). Basic and acidic residues predominate over residues 172–181 (AQDRERERQQ). The RH2 domain maps to 240–316 (QCRFSREEFE…GTPEEAESSE (77 aa)). The tract at residues 272–333 (FQRELLTDHR…LLSDDKGDHP (62 aa)) is necessary for interaction with RAB7A and RAB34, lysosomal distribution and morphology. Thr-308 carries the phosphothreonine modification. Residues 310–319 (EEAESSEDEA) are compositionally biased toward acidic residues. Phosphoserine is present on residues Ser-314 and Ser-315.

As to quaternary structure, homodimer. Interacts with RAB7A. Interacts with RAB34. Identified in a complex with MREG and DCTN1; interacts directly with MREG. Interacts with CLN3. Interacts with FLCN; the interaction is direct and promotes association between RILP and RAB34. As to expression, ubiquitous. Strongly expressed in fetal heart, heart, stomach, spleen, adrenal gland, thyroid gland, salivary gland, fetal liver, liver and lung. Poorly expressed in brain.

Its subcellular location is the late endosome membrane. The protein localises to the lysosome membrane. It is found in the cytoplasmic vesicle. It localises to the phagosome membrane. Rab effector playing a role in late endocytic transport to degradative compartments. Involved in the regulation of lysosomal morphology and distribution. Induces recruitment of dynein-dynactin motor complexes to Rab7A-containing late endosome and lysosome compartments. Promotes centripetal migration of phagosomes and the fusion of phagosomes with the late endosomes and lysosomes. In Homo sapiens (Human), this protein is Rab-interacting lysosomal protein (RILP).